The following is a 403-amino-acid chain: Acetyl-CoA acetyltransferase IB (403 aa).

Catalysis depends on Cys-91, which acts as the Acyl-thioester intermediate. Catalysis depends on proton acceptor residues His-353 and Cys-383. The Microbody targeting signal signature appears at 401-403 (AKL).

It belongs to the thiolase-like superfamily. Thiolase family. As to quaternary structure, multimeric.

It localises to the peroxisome. It carries out the reaction 2 acetyl-CoA = acetoacetyl-CoA + CoA. It functions in the pathway metabolic intermediate biosynthesis; (R)-mevalonate biosynthesis; (R)-mevalonate from acetyl-CoA: step 1/3. This Candida tropicalis (Yeast) protein is Acetyl-CoA acetyltransferase IB (PACTB).